Here is a 245-residue protein sequence, read N- to C-terminus: Ribonuclease PH (245 aa).

Residues R86 and 124-126 contribute to the phosphate site; that span reads GTR.

It belongs to the RNase PH family. Homohexameric ring arranged as a trimer of dimers.

It carries out the reaction tRNA(n+1) + phosphate = tRNA(n) + a ribonucleoside 5'-diphosphate. Phosphorolytic 3'-5' exoribonuclease that plays an important role in tRNA 3'-end maturation. Removes nucleotide residues following the 3'-CCA terminus of tRNAs; can also add nucleotides to the ends of RNA molecules by using nucleoside diphosphates as substrates, but this may not be physiologically important. Probably plays a role in initiation of 16S rRNA degradation (leading to ribosome degradation) during starvation. The protein is Ribonuclease PH of Bacillus cereus (strain G9842).